An 89-amino-acid chain; its full sequence is UPF0147 protein Saci_0891 (89 aa).

It belongs to the UPF0147 family.

The sequence is that of UPF0147 protein Saci_0891 from Sulfolobus acidocaldarius (strain ATCC 33909 / DSM 639 / JCM 8929 / NBRC 15157 / NCIMB 11770).